The primary structure comprises 143 residues: Gastrin-releasing peptide (143 aa).

The first 23 residues, 1-23, serve as a signal peptide directing secretion; that stretch reads MRGPELRLVLLALVLCQAPLGPA. Methionine 50 is subject to Methionine amide. The propeptide occupies 54-143; the sequence is STGESRHVLE…GLKAKEGALS (90 aa). The disordered stretch occupies residues 91–115; the sequence is KGNSSHRSPQLKPLSTHQPTLDTED. Residues 92-111 show a composition bias toward polar residues; sequence GNSSHRSPQLKPLSTHQPTL.

This sequence belongs to the bombesin/neuromedin-B/ranatensin family.

It localises to the secreted. It is found in the cytoplasmic vesicle. Its subcellular location is the secretory vesicle lumen. The protein localises to the cell projection. The protein resides in the neuron projection. Stimulates the release of gastrin and other gastrointestinal hormones. Contributes to the perception of prurient stimuli and to the transmission of itch signals in the spinal cord that promote scratching behavior. Contributes primarily to nonhistaminergic itch sensation. In one study, shown to act in the amygdala as part of an inhibitory network which inhibits memory specifically related to learned fear. In another study, shown to act on vasoactive intestinal peptide (VIP)-expressing cells in the auditory cortex, most likely via extrasynaptic diffusion from local and long-range sources, to mediate disinhibition of glutamatergic cells via VIP cell-specific GRPR signaling which leads to enhanced auditory fear memories. Contributes to the regulation of food intake. Inhibits voltage-gated sodium channels but enhances voltage-gated potassium channels in hippocampal neurons. Induces sighing by acting directly on the pre-Botzinger complex, a cluster of several thousand neurons in the ventrolateral medulla responsible for inspiration during respiratory activity. In terms of biological role, induces an itch response through activation of receptors present on mast cells, triggering mast cell degranulation. This chain is Gastrin-releasing peptide (GRP), found in Cavia porcellus (Guinea pig).